The sequence spans 125 residues: Large ribosomal subunit protein bL12 (125 aa).

It belongs to the bacterial ribosomal protein bL12 family. As to quaternary structure, homodimer. Part of the ribosomal stalk of the 50S ribosomal subunit. Forms a multimeric L10(L12)X complex, where L10 forms an elongated spine to which 2 to 4 L12 dimers bind in a sequential fashion. Binds GTP-bound translation factors.

Functionally, forms part of the ribosomal stalk which helps the ribosome interact with GTP-bound translation factors. Is thus essential for accurate translation. This Mesorhizobium japonicum (strain LMG 29417 / CECT 9101 / MAFF 303099) (Mesorhizobium loti (strain MAFF 303099)) protein is Large ribosomal subunit protein bL12.